We begin with the raw amino-acid sequence, 117 residues long: Large ribosomal subunit protein bL20 (117 aa).

The protein belongs to the bacterial ribosomal protein bL20 family.

In terms of biological role, binds directly to 23S ribosomal RNA and is necessary for the in vitro assembly process of the 50S ribosomal subunit. It is not involved in the protein synthesizing functions of that subunit. The sequence is that of Large ribosomal subunit protein bL20 from Mycoplasma mobile (strain ATCC 43663 / 163K / NCTC 11711) (Mesomycoplasma mobile).